A 2119-amino-acid chain; its full sequence is Outer kinetochore KNL1 complex subunit KNL1 (2119 aa).

A disordered region spans residues 1–59 (MDGVYSEANEENDNTQRPVRRQHSSILKPPRSPLQDLKCGNQTNQEPNPPRKRKSSRRV). Residues 1–202 (MDGVYSEANE…SDNFIKRLKT (202 aa)) are may mediate oligomerization. 2 interaction with microtubules regions span residues 17–34 (RPVR…RSPL) and 53–80 (RKSS…ERNS). The tract at residues 23 to 80 (HSSILKPPRSPLQDLKCGNQTNQEPNPPRKRKSSRRVSFADTIKVFQTESHMKTERNS) is interaction with PP1CA; contains the protein phosphatase 1 (PP1) interaction motifs SILK, RVXF and phi-phi. Phosphoserine is present on residues S24, S32, and S60. The interaction with BUB1 stretch occupies residues 124-140 (ENQMDLTASHTVMITKG). Residues 160–179 (ENLKHHAANSRIKKDLACST) are interaction with BUB1B. The residue at position 538 (S538) is a Phosphoserine. 2 positions are modified to phosphothreonine: T540 and T739. Copy 1 of the repeat occupies 723-827 (DKTILFSEGN…MTKSHTVFID (105 aa)). The 2 X 104 AA approximate repeats stretch occupies residues 723-1027 (DKTILFSEGN…VTRSHTVFID (305 aa)). 2 positions are modified to phosphoserine: S794 and S878. Repeat 2 spans residues 923-1027 (KSITFPENDK…VTRSHTVFID (105 aa)). Phosphoserine occurs at positions 1243 and 1464. Positions 1557–1583 (SQRESLPSENKTENCRAQKRTRVEEND) are disordered. Residues 1566 to 1583 (NKTENCRAQKRTRVEEND) are compositionally biased toward basic and acidic residues. The Nuclear localization signal signature appears at 1577–1590 (TRVEENDVTNEKKI). Phosphoserine is present on residues S1616, S1627, and S1642. Positions 1763–1890 (KVKDYSDEEL…FLEVETQKTQ (128 aa)) are required for interaction with ZWINT. Residues 1799-1890 (VALYNKLVHS…FLEVETQKTQ (92 aa)) adopt a coiled-coil conformation. The tract at residues 1873–2093 (EEEELQRKFL…GKTGHDEIAA (221 aa)) is interaction with NSL1, DSN1 and required for assembly into the outer kinetochore.

As to quaternary structure, component of the KNL1 complex composed of KNL1 and ZWINT. Part of the ten-subunit outer kinetochore KMN network that includes the KNL1, MIS12 and NDC80 complexes; a bioriented kinetochore contains approximately 150 copies of the network. Interacts (via C-terminus) with the MIS12 complex subunits NSL1 (via C-terminus), PMF1 and DSN1; the interaction is direct. Interacts (via N-terminal region) with BUB1B (via BUB1 N-terminal domain); the interaction is direct and is required for cell cycle arrest upon activation of the mitotic spindle assembly checkpoint. Interacts (via N-terminal region) with BUB1 (via BUB1 N-terminal domain); the interaction is direct. Interacts with the protein phosphatase PP1 subunit PPP1CA; the interaction is direct and mutually exclusive with binding to microtubules. Interacts with the protein phosphatase PP1 subunit PPP1CC; the interaction is direct and mutually exclusive with binding to microtubules. In terms of processing, phosphorylation by AURKB negatively regulates its interaction with protein phosphatase 1 (PP1) subunit PPP1CA and with microtubules. In terms of tissue distribution, expressed in oocytes during meiotic progression (at protein level). Expressed during spermatogenesis.

It is found in the nucleus. It localises to the chromosome. The protein resides in the centromere. Its subcellular location is the kinetochore. The protein localises to the cytoplasm. Acts as a component of the outer kinetochore KNL1 complex that serves as a docking point for spindle assembly checkpoint components and mediates microtubule-kinetochore interactions. Kinetochores, consisting of a centromere-associated inner segment and a microtubule-contacting outer segment, play a crucial role in chromosome segregation by mediating the physical connection between centromeric DNA and spindle microtubules. The outer kinetochore is made up of the ten-subunit KMN network, comprising the MIS12, NDC80 and KNL1 complexes, and auxiliary microtubule-associated components; together they connect the outer kinetochore with the inner kinetochore, bind microtubules, and mediate interactions with mitotic checkpoint proteins that delay anaphase until chromosomes are bioriented on the spindle. Required for kinetochore binding by a distinct subset of kMAPs (kinetochore-bound microtubule-associated proteins) and motors. Acts in coordination with CENPK to recruit the NDC80 complex to the outer kinetochore. Can bind either to microtubules or to the protein phosphatase 1 (PP1) catalytic subunits PPP1CA and PPP1CC (via overlapping binding sites), it has higher affinity for PP1. Recruits MAD2L1 to the kinetochore and also directly links BUB1 and BUB1B to the kinetochore. In addition to orienting mitotic chromosomes, it is also essential for alignment of homologous chromosomes during meiotic metaphase I. In meiosis I, required to activate the spindle assembly checkpoint at unattached kinetochores to correct erroneous kinetochore-microtubule attachments. The chain is Outer kinetochore KNL1 complex subunit KNL1 from Mus musculus (Mouse).